Consider the following 1453-residue polypeptide: MFSFVDSRLLLLIAATVLLTRGEGEEDIQTGSCVQDGLTYNDKDVWKPEPCQICVCDSGNILCDEVICEDTSDCPNAEIPFGECCPICPDVDASPVYPESAGVEGPKGDTGPRGDRGLPGPPGRDGIPGQPGLPGPPGPPGPPGLGGNFAPQMSYGYDEKSAGVAVPGPMGPAGPRGLPGPPGAPGPQGFQGPPGEPGEPGASGPMGPRGPAGPPGKNGDDGEAGKPGRPGQRGPPGPQGARGLPGTAGLPGMKGHRGFSGLDGAKGQPGPAGPKGEPGSPGENGAPGQMGPRGLPGERGRPGPSGPAGARGNDGAPGAAGPPGPTGPAGPPGFPGAAGAKGETGPQGARGSEGPQGSRGEPGPPGPAGAAGPAGNPGADGQPGAKGATGAPGIAGAPGFPGARGPSGPQGPSGAPGPKGNSGEPGAPGNKGDTGAKGEPGPAGVQGPPGPAGEEGKRGARGEPGPAGLPGPAGERGAPGSRGFPGADGIAGPKGPPGERGSPGAVGPKGSPGEAGRPGEAGLPGAKGLTGSPGSPGPDGKTGPPGPAGQDGRPGPAGPPGARGQAGVMGFPGPKGAAGEPGKPGERGAPGPPGAVGAAGKDGEAGAQGPPGPTGPAGERGEQGPAGAPGFQGLPGPAGPPGEAGKPGEQGVPGNAGAPGPAGARGERGFPGERGVQGPPGPQGPRGANGAPGNDGAKGDAGAPGAPGNEGPPGLEGMPGERGAAGLPGAKGDRGDPGPKGADGAPGKDGLRGLTGPIGPPGPAGAPGDKGEAGPPGPAGPTGARGAPGDRGEPGPPGPAGFAGPPGADGQPGAKGETGDAGAKGDAGPPGPAGPTGAPGPAGZVGAPGPKGARGSAGPPGATGFPGAAGRVGPPGPSGNIGLPGPPGPAGKZGSKGPRGETGPAGRPGEPGPAGPPGPPGEKGSPGADGPIGAPGTPGPQGIAGQRGVVGLPGQRGERGFPGLPGPSGEPGKQGPSGASGERGPPGPMGPPGLAGPPGEAGREGAPGAEGAPGRDGAAGPKGDRGETGPAGPPGAPGAPGAPGPVGPAGKNGDRGETGPAGPAGPPGPAGARGPAGPQGPRGDKGETGEQGDRGMKGHRGFSGLQGPPGPPGAPGEQGPSGASGPAGPRGPPGSAGAAGKDGLNGLPGPIGPPGPRGRTGEVGPVGPPGPPGPPGPPGPPSGGFDLSFLPQPPQEKAHDGGRYYRADDANVMRDRDLEVDTTLKSLSQQIENIRSPEGTRKNPARTCRDLKMCHGDWKSGEYWIDPNQGCNLDAIKVYCNMETGETCVYPTQATIAQKNWYLSKNPKEKKHVWFGETMSDGFQFEYGGEGSNPADVAIQLTFLRLMSTEATQNVTYHCKNSVAYMDHDTGNLKKALLLQGANEIEIRAEGNSRFTYGVTEDGCTSHTGAWGKTVIEYKTTKTSRLPIIDLAPMDVGAPDQEFGIDIGPVCFL.

Residues 1–22 (MFSFVDSRLLLLIAATVLLTRG) form the signal peptide. A propeptide spans 23-151 (EGEEDIQTGS…PPGLGGNFAP (129 aa)) (N-terminal propeptide). The VWFC domain occupies 31-89 (GSCVQDGLTYNDKDVWKPEPCQICVCDSGNILCDEVICEDTSDCPNAEIPFGECCPICP). The interval 98–1203 (PESAGVEGPK…PQEKAHDGGR (1106 aa)) is disordered. The span at 106–116 (PKGDTGPRGDR) shows a compositional bias: basic and acidic residues. Over residues 131–143 (PGLPGPPGPPGPP) the composition is skewed to pro residues. A Pyrrolidone carboxylic acid modification is found at Q152. Residue K160 is modified to Allysine. Positions 162-176 (AGVAVPGPMGPAGPR) are enriched in low complexity. 4-hydroxyproline occurs at positions 179, 182, 185, 194, 197, 200, 215, 230, 236, 245, and 251. Residues 187 to 206 (PQGFQGPPGEPGEPGASGPM) are compositionally biased toward low complexity. K254 is subject to 5-hydroxylysine; alternate. K254 carries an O-linked (Gal...) hydroxylysine; partial glycan. Residues 265–284 (AKGQPGPAGPKGEPGSPGEN) show a composition bias toward low complexity. 4-hydroxyproline occurs at positions 269, 278, 281, 287, 296, 302, 317, 323, 332, and 335. Positions 307–319 (PAGARGNDGAPGA) are enriched in low complexity. The segment covering 320 to 334 (AGPPGPTGPAGPPGF) has biased composition (pro residues). Over residues 350 to 361 (RGSEGPQGSRGE) the composition is skewed to low complexity. 8 positions are modified to 4-hydroxyproline: P362, P365, P377, P383, P392, P398, P401, and P416. Over residues 368–418 (AGAAGPAGNPGADGQPGAKGATGAPGIAGAPGFPGARGPSGPQGPSGAPGP) the composition is skewed to low complexity. K419 bears the 5-hydroxylysine mark. Residues P425, P428, P440, P449, P464, P470, P479, and P485 each carry the 4-hydroxyproline modification. The segment covering 463–482 (EPGPAGLPGPAGERGAPGSR) has biased composition (low complexity). Residue K494 is modified to 5-hydroxylysine. 31 positions are modified to 4-hydroxyproline: P497, P503, P512, P518, P524, P533, P536, P545, P554, P560, P572, P581, P584, P590, P593, P611, P629, P635, P641, P647, P653, P659, P671, P680, P692, P704, P707, P713, P719, P728, and P737. Residues 527-581 (KGLTGSPGSPGPDGKTGPPGPAGQDGRPGPAGPPGARGQAGVMGFPGPKGAAGEP) are compositionally biased toward low complexity. A compositionally biased stretch (low complexity) spans 623 to 664 (QGPAGAPGFQGLPGPAGPPGEAGKPGEQGVPGNAGAPGPAGA). Residues 685–722 (PRGANGAPGNDGAKGDAGAPGAPGNEGPPGLEGMPGER) show a composition bias toward low complexity. K740 is modified (5-hydroxylysine). 4-hydroxyproline occurs at positions 746, 761, 767, 776, 788, 794, 797, 806, 812, 830, 839, and 848. A compositionally biased stretch (low complexity) spans 800–827 (AGFAGPPGADGQPGAKGETGDAGAKGDA). Over residues 835-883 (PTGAPGPAGZVGAPGPKGARGSAGPPGATGFPGAAGRVGPPGPSGNIGL) the composition is skewed to low complexity. The residue at position 851 (K851) is a 5-hydroxylysine. P860 and P866 each carry 4-hydroxyproline. 3-hydroxyproline is present on P874. P875, P884, P887, P908, P911, P917, P920, P926, P935, P953, P962, P965, P971, P986, P992, P998, P1007, and P1013 each carry 4-hydroxyproline. Positions 890 to 908 (AGKZGSKGPRGETGPAGRP) are enriched in low complexity. Residues 910–920 (EPGPAGPPGPP) show a composition bias toward pro residues. The span at 985–995 (PPGPMGPPGLA) shows a compositional bias: pro residues. The segment covering 997 to 1021 (PPGEAGREGAPGAEGAPGRDGAAGP) has biased composition (low complexity). Position 1022 is a 5-hydroxylysine; partial (K1022). Positions 1031–1046 (AGPPGAPGAPGAPGPV) are enriched in pro residues. 4-hydroxyproline occurs at positions 1034, 1037, 1040, and 1067. Residues 1070-1081 (AGARGPAGPQGP) show a composition bias toward low complexity. The segment covering 1082–1096 (RGDKGETGEQGDRGM) has biased composition (basic and acidic residues). K1085 is subject to 5-hydroxylysine; partial. Residue K1097 is modified to 5-hydroxylysine; alternate. O-linked (Gal...) hydroxylysine; partial glycosylation occurs at K1097. A 4-hydroxyproline mark is found at P1109, P1112, P1115, P1133, and P1148. Over residues 1115–1139 (PGEQGPSGASGPAGPRGPPGSAGAA) the composition is skewed to low complexity. At P1153 the chain carries 3-hydroxyproline. P1154 is subject to 4-hydroxyproline. Residues 1166–1181 (VGPPGPPGPPGPPGPP) show a composition bias toward pro residues. A 3-hydroxyproline modification is found at P1168. Position 1169 is a 4-hydroxyproline (P1169). At P1171 the chain carries 3-hydroxyproline. P1172 is modified (4-hydroxyproline). At P1174 the chain carries 3-hydroxyproline. 4-hydroxyproline is present on residues P1175, P1178, and P1181. The residue at position 1197 (K1197) is an Allysine. The propeptide at 1208–1453 (DDANVMRDRD…GIDIGPVCFL (246 aa)) is C-terminal propeptide. Residues 1218–1453 (LEVDTTLKSL…GIDIGPVCFL (236 aa)) form the Fibrillar collagen NC1 domain. Intrachain disulfides connect C1248/C1280, C1288/C1451, and C1359/C1404. Ca(2+)-binding residues include D1266, N1268, Q1269, C1271, and D1274. N1354 carries an N-linked (GlcNAc...) asparagine glycan.

It belongs to the fibrillar collagen family. In terms of assembly, trimers of one alpha 2(I) and two alpha 1(I) chains. Post-translationally, contains mostly 4-hydroxyproline. Proline residues at the third position of the tripeptide repeating unit (G-X-Y) are 4-hydroxylated in some or all of the chains. Contains 3-hydroxyproline. This modification occurs on the first proline residue in the sequence motif Gly-Pro-Hyp, where Hyp is 4-hydroxyproline. In terms of processing, lysine residues at the third position of the tripeptide repeating unit (G-X-Y) are 5-hydroxylated in some or all of the chains. Post-translationally, O-glycosylated on hydroxylated lysine residues. The O-linked glycan consists of a Glc-Gal disaccharide. In terms of tissue distribution, forms the fibrils of tendon, ligaments and bones. In bones the fibrils are mineralized with calcium hydroxyapatite.

Its subcellular location is the secreted. The protein resides in the extracellular space. The protein localises to the extracellular matrix. In terms of biological role, type I collagen is a member of group I collagen (fibrillar forming collagen). The protein is Collagen alpha-1(I) chain (COL1A1) of Gallus gallus (Chicken).